We begin with the raw amino-acid sequence, 710 residues long: Polyribonucleotide nucleotidyltransferase (710 aa).

Positions 489 and 495 each coordinate Mg(2+). Residues 556 to 615 (PKIDTIKIDVDKIKVVIGKGGETIDKIIAETGVKIDIDDEGNVSIYSSDQAAINRTKEII) form the KH domain. Residues 625–693 (GEVYHAKVVR…EKGRVDASMK (69 aa)) enclose the S1 motif domain. Residues 691 to 710 (SMKALIPRPPKPEKKEEKHD) are disordered. A compositionally biased stretch (basic and acidic residues) spans 700–710 (PKPEKKEEKHD).

Mg(2+) serves as cofactor.

The protein localises to the cytoplasm. It carries out the reaction RNA(n+1) + phosphate = RNA(n) + a ribonucleoside 5'-diphosphate. Functionally, involved in mRNA degradation. Catalyzes the phosphorolysis of single-stranded polyribonucleotides processively in the 3'- to 5'-direction. The polypeptide is Polyribonucleotide nucleotidyltransferase (Streptococcus pyogenes serotype M6 (strain ATCC BAA-946 / MGAS10394)).